The sequence spans 101 residues: uncharacterized protein (101 aa).

An N-terminal signal peptide occupies residues 1–21 (MKLSTCCAALLLALASPAVLA). Polar residues predominate over residues 79-94 (RTTSGNVSAPAQSSQD). The segment at 79–101 (RTTSGNVSAPAQSSQDGAPAEPQ) is disordered.

This is an uncharacterized protein from Escherichia coli (strain K12).